The sequence spans 74 residues: ATP synthase subunit 9, mitochondrial (74 aa).

The next 2 helical transmembrane spans lie at 8–28 (MGAGAATIALAGAAIGIGNVF) and 50–70 (ILGFALTEAIALFALMMAFLI).

The protein belongs to the ATPase C chain family. In terms of assembly, F-type ATPases have 2 components, CF(1) - the catalytic core - and CF(0) - the membrane proton channel. CF(1) has five subunits: alpha(3), beta(3), gamma(1), delta(1), epsilon(1). CF(0) has three main subunits: a, b and c.

The protein resides in the mitochondrion membrane. In terms of biological role, this protein is one of the chains of the nonenzymatic membrane component (F0) of mitochondrial ATPase. This chain is ATP synthase subunit 9, mitochondrial (ATP9), found in Solanum lycopersicum (Tomato).